Consider the following 661-residue polypeptide: CD180 antigen (661 aa).

A signal peptide spans 1–20 (MAPDISCFFLVALFLASCRA). The Extracellular portion of the chain corresponds to 21 to 626 (TTSSDQKCIE…RLSDVTLSCS (606 aa)). Positions 33–53 (VNKTYNCENLGLNEIPGTLPN) constitute an LRRNT domain. N-linked (GlcNAc...) asparagine glycans are attached at residues Asn-34, Asn-53, Asn-70, and Asn-78. LRR repeat units follow at residues 54–75 (STEC…TFSR), 78–99 (NLTF…TFQS), 102–123 (RLDT…ALSG), 126–147 (ALKH…PLHN), 150–171 (TLES…KGFP), 174–195 (KLKV…DMSS), and 201–221 (NLSL…AFDS). N-linked (GlcNAc...) asparagine glycosylation is found at Asn-201, Asn-244, and Asn-288. LRR repeat units lie at residues 275–296 (SVES…TFHC), 299–321 (GLQE…VGLS), 322–343 (TLKK…SASN), 346–366 (SLTH…TGCL), and 371–391 (NLRE…CNLQ). Asn-394 and Asn-402 each carry an N-linked (GlcNAc...) asparagine glycan. LRR repeat units lie at residues 397–418 (HLQS…AFKE), 421–442 (QLEL…SPFQ), 446–466 (LLKV…QLFD), 470–493 (ALQH…NSLQ), 497–518 (RLEI…AFTS), 521–544 (MMNH…SHLK), and 546–566 (IYLN…LPIL). Asn-451 is a glycosylation site (N-linked (GlcNAc...) asparagine). The 51-residue stretch at 577-627 (NPLDCTCSNIYFLEWYKENMQKLEDTEDTLCENPPLLRGVRLSDVTLSCSM) folds into the LRRCT domain. Residues 627-650 (MAAVGIFFLIVFLLVFAILLIFAV) form a helical membrane-spanning segment. Over 651–661 (KYFLRWKYQHI) the chain is Cytoplasmic.

The protein belongs to the Toll-like receptor family. In terms of assembly, M-shaped tetramer of two CD180-LY86 heterodimers. As to expression, B-lymphocytes and spleen. Not detected in thymus, kidney, muscle, heart, brain or liver.

It is found in the cell membrane. In terms of biological role, may cooperate with MD-1 and TLR4 to mediate the innate immune response to bacterial lipopolysaccharide (LPS) in B-cells. Leads to NF-kappa-B activation. Also involved in the life/death decision of B-cells. In Mus musculus (Mouse), this protein is CD180 antigen (Cd180).